Here is a 431-residue protein sequence, read N- to C-terminus: UDP-N-acetylmuramate--L-alanine ligase (431 aa).

Position 108–114 (108–114 (GAHGKST)) interacts with ATP.

It belongs to the MurCDEF family.

The protein localises to the cytoplasm. The enzyme catalyses UDP-N-acetyl-alpha-D-muramate + L-alanine + ATP = UDP-N-acetyl-alpha-D-muramoyl-L-alanine + ADP + phosphate + H(+). It functions in the pathway cell wall biogenesis; peptidoglycan biosynthesis. Cell wall formation. The protein is UDP-N-acetylmuramate--L-alanine ligase of Campylobacter jejuni subsp. doylei (strain ATCC BAA-1458 / RM4099 / 269.97).